The following is a 293-amino-acid chain: UPF0282 protein MK0213 (293 aa).

Belongs to the UPF0282 family.

This chain is UPF0282 protein MK0213, found in Methanopyrus kandleri (strain AV19 / DSM 6324 / JCM 9639 / NBRC 100938).